Reading from the N-terminus, the 225-residue chain is Uracil-DNA glycosylase (225 aa).

The Proton acceptor role is filled by aspartate 68.

It belongs to the uracil-DNA glycosylase (UDG) superfamily. UNG family.

It is found in the cytoplasm. It catalyses the reaction Hydrolyzes single-stranded DNA or mismatched double-stranded DNA and polynucleotides, releasing free uracil.. In terms of biological role, excises uracil residues from the DNA which can arise as a result of misincorporation of dUMP residues by DNA polymerase or due to deamination of cytosine. This is Uracil-DNA glycosylase from Mycolicibacterium vanbaalenii (strain DSM 7251 / JCM 13017 / BCRC 16820 / KCTC 9966 / NRRL B-24157 / PYR-1) (Mycobacterium vanbaalenii).